The primary structure comprises 311 residues: Long form salivary protein D7L1 (311 aa).

A signal peptide spans 1–16; that stretch reads MKALIFLGAIIAGVLS. 2 disulfides stabilise this stretch: Cys-34–Cys-67 and Cys-63–Cys-120. Positions 146, 149, 153, and 160 each coordinate ADP. 3 cysteine pairs are disulfide-bonded: Cys-170/Cys-202, Cys-183/Cys-311, and Cys-244/Cys-258. ADP is bound by residues Asn-281, Tyr-282, and Ser-283.

This sequence belongs to the PBP/GOBP family. In terms of tissue distribution, distal lateral and medial lobes of female mosquito salivary gland (at protein level). Expressed in the head and thorax of the female mosquitoes, where the salivary glands are located. Expressed in salivary gland. Not detected in the female mosquito abdomen. Not detected in the male mosquito tissues.

Its subcellular location is the secreted. In terms of biological role, modulates blood feeding of female mosquitoes on vertebrate species by binding and sequestering different mediators involved in the host response. Binds adenine, adenosine, AMP, ADP and ATP, with the highest affinity to ATP and ADP. Inhibits agonist-induced platelet aggregation and hemostasis. This is Long form salivary protein D7L1 from Culex quinquefasciatus (Southern house mosquito).